The sequence spans 185 residues: Adenine phosphoribosyltransferase (185 aa).

Belongs to the purine/pyrimidine phosphoribosyltransferase family. As to quaternary structure, homodimer.

It is found in the cytoplasm. The catalysed reaction is AMP + diphosphate = 5-phospho-alpha-D-ribose 1-diphosphate + adenine. Its pathway is purine metabolism; AMP biosynthesis via salvage pathway; AMP from adenine: step 1/1. Functionally, catalyzes a salvage reaction resulting in the formation of AMP, that is energically less costly than de novo synthesis. The chain is Adenine phosphoribosyltransferase from Shewanella denitrificans (strain OS217 / ATCC BAA-1090 / DSM 15013).